Consider the following 120-residue polypeptide: MKKLTKTNSHRQQKLASIINEALIEILRRGKMLDSRLFDCPLTITKVIVTADLKIANCYFLPFNTKLTIDEIMDALSNSKNAIRNFITNKINMKFSPDIRFHYDHGFDNAIKVEELLKNI.

It belongs to the RbfA family. As to quaternary structure, monomer. Binds 30S ribosomal subunits, but not 50S ribosomal subunits or 70S ribosomes.

Its subcellular location is the cytoplasm. In terms of biological role, one of several proteins that assist in the late maturation steps of the functional core of the 30S ribosomal subunit. Associates with free 30S ribosomal subunits (but not with 30S subunits that are part of 70S ribosomes or polysomes). Required for efficient processing of 16S rRNA. May interact with the 5'-terminal helix region of 16S rRNA. The polypeptide is Ribosome-binding factor A (Rickettsia felis (strain ATCC VR-1525 / URRWXCal2) (Rickettsia azadi)).